Consider the following 596-residue polypeptide: Aspartate--tRNA(Asp/Asn) ligase (596 aa).

An L-aspartate-binding site is contributed by glutamate 175. Residues 199–202 (QQYK) form an aspartate region. L-aspartate is bound by residues arginine 221 and histidine 454. 221–223 (RDE) contacts ATP. ATP is bound at residue glutamate 488. Arginine 495 serves as a coordination point for L-aspartate. 540–543 (GIDR) is an ATP binding site.

The protein belongs to the class-II aminoacyl-tRNA synthetase family. Type 1 subfamily. Homodimer.

It localises to the cytoplasm. It catalyses the reaction tRNA(Asx) + L-aspartate + ATP = L-aspartyl-tRNA(Asx) + AMP + diphosphate. Its function is as follows. Aspartyl-tRNA synthetase with relaxed tRNA specificity since it is able to aspartylate not only its cognate tRNA(Asp) but also tRNA(Asn). Reaction proceeds in two steps: L-aspartate is first activated by ATP to form Asp-AMP and then transferred to the acceptor end of tRNA(Asp/Asn). This is Aspartate--tRNA(Asp/Asn) ligase from Rhizobium leguminosarum bv. trifolii (strain WSM2304).